The chain runs to 150 residues: Protein-export protein SecB (150 aa).

The protein belongs to the SecB family. As to quaternary structure, homotetramer, a dimer of dimers. One homotetramer interacts with 1 SecA dimer.

Its subcellular location is the cytoplasm. One of the proteins required for the normal export of preproteins out of the cell cytoplasm. It is a molecular chaperone that binds to a subset of precursor proteins, maintaining them in a translocation-competent state. It also specifically binds to its receptor SecA. This Acidovorax ebreus (strain TPSY) (Diaphorobacter sp. (strain TPSY)) protein is Protein-export protein SecB.